The following is a 152-amino-acid chain: uncharacterized protein (152 aa).

This is an uncharacterized protein from Acanthamoeba polyphaga (Amoeba).